The chain runs to 427 residues: Ribosome biogenesis protein WDR12 homolog (427 aa).

A ubiquitin-like (UBL) domain region spans residues 13 to 97; the sequence is LQLHLYTKQK…EDTVELEYVE (85 aa). 7 WD repeats span residues 109 to 146, 148 to 190, 197 to 236, 260 to 298, 301 to 339, 345 to 385, and 389 to 427; these read LHDD…KLTI, GHIA…NSVE, GHER…DGDS, GHRE…IKSE, GHKS…GTIV, GHTQ…APIF, and GHED…GEQK.

The protein belongs to the WD repeat WDR12/YTM1 family.

The protein resides in the nucleus. It localises to the nucleolus. Its subcellular location is the nucleoplasm. Required for maturation of ribosomal RNAs and formation of the large ribosomal subunit. This chain is Ribosome biogenesis protein WDR12 homolog, found in Aedes aegypti (Yellowfever mosquito).